A 485-amino-acid polypeptide reads, in one-letter code: Protein disulfide-isomerase 1 (485 aa).

Positions 1-20 are cleaved as a signal peptide; the sequence is MSLSVSFIFLLVASIGAVVA. 2 Thioredoxin domains span residues 21-130 and 342-470; these read DSEN…KKSG and YLEG…KYAG. 2 disulfide bridges follow: cysteine 52-cysteine 55 and cysteine 393-cysteine 396. Residues cysteine 393 and cysteine 396 each act as nucleophile in the active site. Positions 482-485 match the Prevents secretion from ER motif; that stretch reads HEEL.

This sequence belongs to the protein disulfide isomerase family.

It is found in the endoplasmic reticulum lumen. It carries out the reaction Catalyzes the rearrangement of -S-S- bonds in proteins.. This chain is Protein disulfide-isomerase 1 (pdi-1), found in Caenorhabditis elegans.